The chain runs to 220 residues: 7-cyano-7-deazaguanine synthase (220 aa).

10–20 contributes to the ATP binding site; it reads FSGGQDSTTCL. The Zn(2+) site is built by Cys186, Cys195, Cys198, and Cys201.

This sequence belongs to the QueC family. In terms of assembly, homodimer. Zn(2+) is required as a cofactor.

The catalysed reaction is 7-carboxy-7-deazaguanine + NH4(+) + ATP = 7-cyano-7-deazaguanine + ADP + phosphate + H2O + H(+). It participates in purine metabolism; 7-cyano-7-deazaguanine biosynthesis. In terms of biological role, catalyzes the ATP-dependent conversion of 7-carboxy-7-deazaguanine (CDG) to 7-cyano-7-deazaguanine (preQ(0)). The chain is 7-cyano-7-deazaguanine synthase from Bacillus anthracis (strain A0248).